The chain runs to 1008 residues: ATP-dependent DNA/RNA helicase DHX36 (1008 aa).

The tract at residues 1–51 is required for recruitment to cytoplasmic stress granules; the sequence is MSYDYHQNWGRDGGPRSSGGGYGGGPAGGHGGNRGSGGGGGGGGGGRGGRG. The interval 1-58 is disordered; the sequence is MSYDYHQNWGRDGGPRSSGGGYGGGPAGGHGGNRGSGGGGGGGGGGRGGRGRHPGHLK. The segment at 1 to 104 is required for the pre-miR-134 transport; the sequence is MSYDYHQNWG…IVQLLNSVQA (104 aa). The tract at residues 1-200 is necessary for nuclear and nucleolar caps localizations; sequence MSYDYHQNWG…KKNDLRYIEM (200 aa). Over residues 16-48 the composition is skewed to gly residues; the sequence is RSSGGGYGGGPAGGHGGNRGSGGGGGGGGGGRG. Residues 53–75 are DSM (DHX36-specific motif); it reads HPGHLKGREIGMWYAKKQGQKNK. The segment at 53 to 105 is required for G4-DNA- and G4-RNA-binding; it reads HPGHLKGREIGMWYAKKQGQKNKEAERQERAVVHMDERREEQIVQLLNSVQAK. A coiled-coil region spans residues 72 to 157; that stretch reads QKNKEAERQE…INQEKKMFRI (86 aa). 2 recA-like domain regions span residues 106 to 386 and 387 to 628; these read NDKE…MIHI and PGFT…DYQL. Ser161 carries the post-translational modification Phosphoserine. The 171-residue stretch at 217–387 folds into the Helicase ATP-binding domain; sequence VNLIDNHQVT…FGNCPMIHIP (171 aa). Position 233–238 (233–238) interacts with ATP; the sequence is GCGKTT. The interval 265–317 is necessary for interaction with single-stranded DNA at the 3'-end of the G4-DNA structure; sequence RRISAISVAERVAAERAESCGSGNSTGYQIRLQSRLPRKQGSILYCTTGIILQ. The short motif at 334 to 337 is the DEAH box element; that stretch reads DEIH. Mg(2+) is bound by residues Glu335 and His337. Positions 477-647 constitute a Helicase C-terminal domain; that stretch reads ALIRYIVLEE…ELCLQIKILR (171 aa). The interval 498–557 is necessary for interaction with single-stranded DNA at the 3'-end of the G4-DNA structure; sequence WDNISTLHDLLMSQVMFKSDKFLIIPLHSLMPTVNQTQVFKRTPPGVRKIVIATNIAETS. Residues 517 to 528 carry the Nuclear localization signal motif; the sequence is DKFLIIPLHSLM. ATP is bound by residues Ser557 and 602-605; that span reads RAGR. The segment at 629–698 is WH domain; that stretch reads PEILRTPLEE…LGVHLARLPV (70 aa). Necessary for interaction with single-stranded DNA at the 3'-end of the G4-DNA structure stretches follow at residues 638 to 697, 849 to 860, and 870 to 900; these read ELCL…ARLP, NLGKKRKMVKVY, and HPKS…IYLY. The segment at 841–905 is OB-fold-like subdomains; that stretch reads PKVAKIRLNL…SIYLYDCTEV (65 aa). The residue at position 947 (Lys947) is an N6-acetyllysine. Position 963 is a phosphoserine (Ser963).

It belongs to the DEAD box helicase family. DEAH subfamily. Found in a multi-helicase-TICAM1 complex at least composed of DHX36, DDX1, DDX21 and TICAM1; this complex exists in resting cells with or without dsRNA poly(I:C) ligand stimulation. Interacts (via C-terminus) with TICAM1 (via TIR domain). Interacts (via C-terminus) with DDX21; this interaction serves as bridges to TICAM1. Interacts with TERT; this interaction is dependent on the ability of DHX36 to bind to the G-quadruplex RNA (G4-RNA) structure present in the telomerase RNA template component (TERC). Interacts with DKC1; this interaction is dependent on the ability of DHX36 to bind to the G4-RNA structure present in TERC. Interacts with PARN; this interaction stimulates PARN to enhance uPA mRNA decay. Interacts with EXOSC3; this interaction occurs in a RNase-insensitive manner. Interacts with EXOSC10; this interaction occurs in a RNase-insensitive manner. Interacts with ILF3; this interaction occurs in a RNA-dependent manner. Interacts with ELAVL1; this interaction occurs in an RNA-dependent manner. Interacts with DDX5; this interaction occurs in a RNA-dependent manner. Interacts with DDX17; this interaction occurs in a RNA-dependent manner. Interacts with HDAC1; this interaction occurs in a RNA-dependent manner. Interacts with HDAC3; this interaction occurs in a RNA-dependent manner. Interacts with HDAC4. Interacts with AGO1. Interacts with AGO2. Interacts with ERCC6. It depends on Mg(2+) as a cofactor. Highly expressed in testis.

Its subcellular location is the nucleus. It is found in the cytoplasm. It localises to the cytosol. The protein resides in the stress granule. The protein localises to the nucleus speckle. Its subcellular location is the chromosome. It is found in the telomere. It localises to the mitochondrion. The protein resides in the perikaryon. The protein localises to the cell projection. Its subcellular location is the dendrite. It is found in the axon. It carries out the reaction ATP + H2O = ADP + phosphate + H(+). ATPase activity is enhanced in the presence of homomeric poly(U) RNAs, but not by double-stranded DNA (dsDNA), double-stranded RNA (dsRNA) and tRNA. Its function is as follows. Multifunctional ATP-dependent helicase that unwinds G-quadruplex (G4) structures. Plays a role in many biological processes such as genomic integrity, gene expression regulations and as a sensor to initiate antiviral responses. G4 structures correspond to helical structures containing guanine tetrads. Binds with high affinity to and unwinds G4 structures that are formed in nucleic acids (G4-DNA and G4-RNA). Plays a role in genomic integrity. Converts the G4-RNA structure present in telomerase RNA template component (TREC) into a double-stranded RNA to promote P1 helix formation that acts as a template boundary ensuring accurate reverse transcription. Plays a role in transcriptional regulation. Resolves G4-DNA structures in promoters of genes, such as YY1, KIT/c-kit and ALPL and positively regulates their expression. Plays a role in post-transcriptional regulation. Unwinds a G4-RNA structure located in the 3'-UTR polyadenylation site of the pre-mRNA TP53 and stimulates TP53 pre-mRNA 3'-end processing in response to ultraviolet (UV)-induced DNA damage. Binds to the precursor-microRNA-134 (pre-miR-134) terminal loop and regulates its transport into the synapto-dendritic compartment. Involved in the pre-miR-134-dependent inhibition of target gene expression and the control of dendritic spine size. Plays a role in the regulation of cytoplasmic mRNA translation and mRNA stability. Binds to both G4-RNA structures and alternative non-quadruplex-forming sequence within the 3'-UTR of the PITX1 mRNA regulating negatively PITX1 protein expression. Binds to both G4-RNA structure in the 5'-UTR and AU-rich elements (AREs) localized in the 3'-UTR of NKX2-5 mRNA to either stimulate protein translation or induce mRNA decay in an ELAVL1-dependent manner, respectively. Also binds to ARE sequences present in several mRNAs mediating exosome-mediated 3'-5' mRNA degradation. Involved in cytoplasmic urokinase-type plasminogen activator (uPA) mRNA decay. Component of a multi-helicase-TICAM1 complex that acts as a cytoplasmic sensor of viral double-stranded RNA (dsRNA) and plays a role in the activation of a cascade of antiviral responses including the induction of pro-inflammatory cytokines via the adapter molecule TICAM1. Required for early embryonic development and hematopoiesis. Involved in the regulation of cardioblast differentiation and proliferation during heart development. Involved in spermatogonia differentiation. May play a role in ossification. The chain is ATP-dependent DNA/RNA helicase DHX36 from Homo sapiens (Human).